The chain runs to 269 residues: Tropinone reductase homolog At2g29320 (269 aa).

Leucine 19–histidine 43 contacts NADP(+). Substrate is bound at residue serine 152. The active-site Proton acceptor is the tyrosine 166.

This sequence belongs to the short-chain dehydrogenases/reductases (SDR) family. SDR65C subfamily.

In Arabidopsis thaliana (Mouse-ear cress), this protein is Tropinone reductase homolog At2g29320.